A 245-amino-acid polypeptide reads, in one-letter code: MRVGVLGAKGKVGATMVSAVESAADLTLSAEVDAGDPLSTLTETNTEAVIDFTHPDVVMGNLEFLIFNGIHAVVGTTGFTAERVEQVQSWLAKKPSTAVLIAPNFAIGAVLSMHFAKQAAPFFDSAEIIELHHPQKADAPSGTATRTAKLIAEAREGLAPNPDATSTSLPGARGADVDGIPVHAVRLAGLVAHQEVLFGTQGETLTIRHDSLDRTSFVPGVLLAVRRVRERPGLTIGIEPLLNLQ.

NAD(+) contacts are provided by residues 7-12 (GAKGKV), 75-77 (GTT), and 102-105 (APNF). Catalysis depends on His132, which acts as the Proton donor/acceptor. (S)-2,3,4,5-tetrahydrodipicolinate is bound at residue His133. Lys136 acts as the Proton donor in catalysis. A (S)-2,3,4,5-tetrahydrodipicolinate-binding site is contributed by 142 to 143 (GT).

The protein belongs to the DapB family.

It is found in the cytoplasm. The enzyme catalyses (S)-2,3,4,5-tetrahydrodipicolinate + NAD(+) + H2O = (2S,4S)-4-hydroxy-2,3,4,5-tetrahydrodipicolinate + NADH + H(+). It catalyses the reaction (S)-2,3,4,5-tetrahydrodipicolinate + NADP(+) + H2O = (2S,4S)-4-hydroxy-2,3,4,5-tetrahydrodipicolinate + NADPH + H(+). The protein operates within amino-acid biosynthesis; L-lysine biosynthesis via DAP pathway; (S)-tetrahydrodipicolinate from L-aspartate: step 4/4. Functionally, catalyzes the conversion of 4-hydroxy-tetrahydrodipicolinate (HTPA) to tetrahydrodipicolinate. This chain is 4-hydroxy-tetrahydrodipicolinate reductase, found in Mycobacterium ulcerans (strain Agy99).